The chain runs to 349 residues: MQLTVLASAILALAQGALAIPAKAPALDVTLSQIDNTRVKAVVKNTGAEEVTFVHLNFFRDAAPVKKVSLFRNATEVPFNGIKLRFRNKGLTDDVLTTLAAGATFEDEFDIASTADLTEGGVVTVRSQGVVPLTKDNKVSGYIPFTSNEIELEVDGAKAAAVPAAINLLDRRTKVASCSGSRATALQTALRNTVSLANAAASAAESGSSSRFSEYFKTTSSATRSTVAARLRAVAREAGSTSSGKTTYYCGDPYGYCDPNVLAYTLPSKNIVANCDIYYSDLPALARSCHAQDQATTTLHEFTHAPGVYSPGTDDLGYGYQAATALSTSDALNNADTYALFANAVNLNC.

Positions 1–19 (MQLTVLASAILALAQGALA) are cleaved as a signal peptide. Positions 20-172 (IPAKAPALDV…PAAINLLDRR (153 aa)) are excised as a propeptide. 2 disulfide bridges follow: Cys178/Cys250 and Cys257/Cys275. His300 contacts Zn(2+). Glu301 is an active-site residue. Zn(2+) contacts are provided by His304 and Asp315.

Belongs to the peptidase M35 family. The cofactor is Zn(2+).

It is found in the secreted. It catalyses the reaction Preferential cleavage of bonds with hydrophobic residues in P1'. Also 3-Asn-|-Gln-4 and 8-Gly-|-Ser-9 bonds in insulin B chain.. In terms of biological role, secreted metalloproteinase that allows assimilation of proteinaceous substrates. Shows high activities on basic nuclear substrates such as histone and protamine. The polypeptide is Neutral protease 2 homolog ACLA_052720 (Aspergillus clavatus (strain ATCC 1007 / CBS 513.65 / DSM 816 / NCTC 3887 / NRRL 1 / QM 1276 / 107)).